Reading from the N-terminus, the 269-residue chain is Indole-3-glycerol phosphate synthase 1 (269 aa).

This sequence belongs to the TrpC family.

It catalyses the reaction 1-(2-carboxyphenylamino)-1-deoxy-D-ribulose 5-phosphate + H(+) = (1S,2R)-1-C-(indol-3-yl)glycerol 3-phosphate + CO2 + H2O. The protein operates within amino-acid biosynthesis; L-tryptophan biosynthesis; L-tryptophan from chorismate: step 4/5. The chain is Indole-3-glycerol phosphate synthase 1 (trpC1) from Streptomyces coelicolor (strain ATCC BAA-471 / A3(2) / M145).